The chain runs to 371 residues: Cytochrome b (371 aa).

The next 4 helical transmembrane spans lie at 25–45, 69–90, 105–125, and 170–190; these read FGSMLLTCLALQTLTGFFLAV, WMMQNLHAIGASMFFICIYIHI, WMSGITLLIILMATAFFGYVL, and FFALHFILPFAIISLSSLHVI. The heme b site is built by histidine 75 and histidine 89. Heme b is bound by residues histidine 174 and histidine 188. Histidine 193 serves as a coordination point for a ubiquinone. Helical transmembrane passes span 218–238, 280–300, 312–332, and 339–358; these read YKDLLLLTLMILSLLIIVSFF, LGGALALVMSIMILLTIPFTH, LSQLMFWTLVSTFITITWAAT, and FIIISQVTATLYFTFFISTP.

The protein belongs to the cytochrome b family. The cytochrome bc1 complex contains 3 respiratory subunits (MT-CYB, CYC1 and UQCRFS1), 2 core proteins (UQCRC1 and UQCRC2) and probably 6 low-molecular weight proteins. The cofactor is heme b.

The protein localises to the mitochondrion inner membrane. Component of the ubiquinol-cytochrome c reductase complex (complex III or cytochrome b-c1 complex) that is part of the mitochondrial respiratory chain. The b-c1 complex mediates electron transfer from ubiquinol to cytochrome c. Contributes to the generation of a proton gradient across the mitochondrial membrane that is then used for ATP synthesis. The polypeptide is Cytochrome b (MT-CYB) (Python sebae (African rock python)).